The sequence spans 350 residues: Phosphotriesterase-related protein (350 aa).

A divalent metal cation contacts are provided by histidine 24, histidine 26, glutamate 170, histidine 202, histidine 231, and aspartate 299.

It belongs to the metallo-dependent hydrolases superfamily. Phosphotriesterase family. The cofactor is a divalent metal cation.

In Nematostella vectensis (Starlet sea anemone), this protein is Phosphotriesterase-related protein.